Consider the following 484-residue polypeptide: ATP-dependent RNA helicase DDX25 (484 aa).

At Thr-49 the chain carries Phosphothreonine. Positions 62–75 match the Nuclear export signal motif; it reads LAANSLLNKLIRQS. A Q motif motif is present at residues 98 to 126; the sequence is KTFEELRLKEELLKGIYAMGFNRPSKIQE. The Nuclear localization signal motif lies at 101 to 115; it reads EELRLKEELLKGIYA. Residues 131-301 form the Helicase ATP-binding domain; it reads MMLAHPPQNL…ERIIPDPNVI (171 aa). 144–151 is a binding site for ATP; it reads SQSGTGKT. Positions 248–251 match the DEAD box motif; that stretch reads DEAD. The Helicase C-terminal domain occupies 312 to 479; sequence NIRQYYVLCE…QLDPEDMDEI (168 aa).

Belongs to the DEAD box helicase family. Post-translationally, phosphorylated on threonine residues. The phosphorylated form is found in the cytoplasm but not in the nucleus. As to expression, isoform 1 is expressed in germ cells. Isoform 2 is expressed in Leydig cells and in round spermatids of adult testis upon gonadotropin stimulation.

Its subcellular location is the cytoplasm. The protein localises to the nucleus. The enzyme catalyses ATP + H2O = ADP + phosphate + H(+). ATP-dependent RNA helicase. Required for mRNA export and translation regulation during spermatid development. The chain is ATP-dependent RNA helicase DDX25 (Ddx25) from Mus musculus (Mouse).